The sequence spans 617 residues: Probable Xaa-Pro aminopeptidase P (617 aa).

Mn(2+) is bound by residues Asp414, Asp425, Glu523, and Glu537.

The protein belongs to the peptidase M24B family. Mn(2+) serves as cofactor.

It carries out the reaction Release of any N-terminal amino acid, including proline, that is linked to proline, even from a dipeptide or tripeptide.. Its function is as follows. Catalyzes the removal of a penultimate prolyl residue from the N-termini of peptides. The sequence is that of Probable Xaa-Pro aminopeptidase P (AMPP) from Ajellomyces dermatitidis (strain ER-3 / ATCC MYA-2586) (Blastomyces dermatitidis).